The following is a 248-amino-acid chain: MDRVAFTLFGIDIMWYGILMACGMILGTLIAIKEAKRVGIKEDDVLNIAIIAIPVGLICARIYYVVFNWSYYAQNMSQIFNFRGGGLAIHGGLIGGILAGYIYTKIKNINFLKMADTVILGMPLAQAIGRWGNFINGEAHGGATNLPWGIMVDGVKVHPTFLYESIWDFGIFIVLLLFRKNKKYEGQVIVTYITLYSIGRFFIEGLRTDSLMLGPLRMAQVISLIGVIGGIIAHVYLSKKNKNNISEE.

A run of 3 helical transmembrane segments spans residues 6–26 (FTLF…GMIL), 47–67 (NIAI…YVVF), and 84–104 (GGGL…YIYT). Residue arginine 130 participates in a 1,2-diacyl-sn-glycero-3-phospho-(1'-sn-glycerol) binding. 2 helical membrane-spanning segments follow: residues 186–206 (GQVI…IEGL) and 218–238 (MAQV…VYLS).

Belongs to the Lgt family.

It is found in the cell membrane. The enzyme catalyses L-cysteinyl-[prolipoprotein] + a 1,2-diacyl-sn-glycero-3-phospho-(1'-sn-glycerol) = an S-1,2-diacyl-sn-glyceryl-L-cysteinyl-[prolipoprotein] + sn-glycerol 1-phosphate + H(+). It functions in the pathway protein modification; lipoprotein biosynthesis (diacylglyceryl transfer). Functionally, catalyzes the transfer of the diacylglyceryl group from phosphatidylglycerol to the sulfhydryl group of the N-terminal cysteine of a prolipoprotein, the first step in the formation of mature lipoproteins. The sequence is that of Phosphatidylglycerol--prolipoprotein diacylglyceryl transferase from Clostridioides difficile (strain 630) (Peptoclostridium difficile).